A 106-amino-acid chain; its full sequence is Small ribosomal subunit protein uS10 (106 aa).

Belongs to the universal ribosomal protein uS10 family. In terms of assembly, part of the 30S ribosomal subunit.

In terms of biological role, involved in the binding of tRNA to the ribosomes. This is Small ribosomal subunit protein uS10 from Wolbachia sp. subsp. Drosophila simulans (strain wRi).